Here is a 612-residue protein sequence, read N- to C-terminus: Threonine--tRNA ligase (612 aa).

The tract at residues 218–509 is catalytic; that stretch reads DHRKLGVELG…LSEHFGGNFP (292 aa). Cys310, His361, and His486 together coordinate Zn(2+).

This sequence belongs to the class-II aminoacyl-tRNA synthetase family. Homodimer. The cofactor is Zn(2+).

Its subcellular location is the cytoplasm. It catalyses the reaction tRNA(Thr) + L-threonine + ATP = L-threonyl-tRNA(Thr) + AMP + diphosphate + H(+). Functionally, catalyzes the attachment of threonine to tRNA(Thr) in a two-step reaction: L-threonine is first activated by ATP to form Thr-AMP and then transferred to the acceptor end of tRNA(Thr). Also edits incorrectly charged L-seryl-tRNA(Thr). The protein is Threonine--tRNA ligase of Helicobacter pylori (strain HPAG1).